Here is a 209-residue protein sequence, read N- to C-terminus: Ribosomal RNA large subunit methyltransferase E (209 aa).

Residues Gly-63, Trp-65, Asp-83, Asp-99, and Asp-124 each contribute to the S-adenosyl-L-methionine site. Lys-164 serves as the catalytic Proton acceptor.

Belongs to the class I-like SAM-binding methyltransferase superfamily. RNA methyltransferase RlmE family.

It is found in the cytoplasm. It carries out the reaction uridine(2552) in 23S rRNA + S-adenosyl-L-methionine = 2'-O-methyluridine(2552) in 23S rRNA + S-adenosyl-L-homocysteine + H(+). Its function is as follows. Specifically methylates the uridine in position 2552 of 23S rRNA at the 2'-O position of the ribose in the fully assembled 50S ribosomal subunit. The sequence is that of Ribosomal RNA large subunit methyltransferase E from Vibrio vulnificus (strain CMCP6).